The following is a 326-amino-acid chain: Tagatose 1,6-diphosphate aldolase (326 aa).

Belongs to the aldolase LacD family.

The catalysed reaction is D-tagatofuranose 1,6-bisphosphate = D-glyceraldehyde 3-phosphate + dihydroxyacetone phosphate. It functions in the pathway carbohydrate metabolism; D-tagatose 6-phosphate degradation; D-glyceraldehyde 3-phosphate and glycerone phosphate from D-tagatose 6-phosphate: step 2/2. This is Tagatose 1,6-diphosphate aldolase from Staphylococcus aureus (strain MSSA476).